A 269-amino-acid polypeptide reads, in one-letter code: Shikimate dehydrogenase (NADP(+)) (269 aa).

Shikimate is bound by residues 22 to 24 and Thr-68; that span reads TLS. Lys-72 acts as the Proton acceptor in catalysis. Residues Asn-93 and Asp-104 each coordinate shikimate. Residues 128-132, 152-157, and Phe-210 contribute to the NADP(+) site; these read GAGGA and NRTNLR. Tyr-212 contributes to the shikimate binding site. An NADP(+)-binding site is contributed by Gly-233.

It belongs to the shikimate dehydrogenase family. Homodimer.

It carries out the reaction shikimate + NADP(+) = 3-dehydroshikimate + NADPH + H(+). The protein operates within metabolic intermediate biosynthesis; chorismate biosynthesis; chorismate from D-erythrose 4-phosphate and phosphoenolpyruvate: step 4/7. In terms of biological role, involved in the biosynthesis of the chorismate, which leads to the biosynthesis of aromatic amino acids. Catalyzes the reversible NADPH linked reduction of 3-dehydroshikimate (DHSA) to yield shikimate (SA). This chain is Shikimate dehydrogenase (NADP(+)), found in Saccharolobus islandicus (strain Y.N.15.51 / Yellowstone #2) (Sulfolobus islandicus).